The following is a 443-amino-acid chain: uncharacterized protein (443 aa).

The next 10 helical transmembrane spans lie at 7–29, 68–87, 94–111, 121–143, 150–164, 179–201, 206–225, 358–375, 382–399, and 409–431; these read VSLY…MLNT, YISS…SIFT, VLSL…YAIF, VTLF…SMFA, IVII…SLTC, IIST…YIFF, LIIK…FAIS, IRFI…FIRN, LFVV…SFFG, and LFGM…IYKI.

It is found in the cell membrane. This is an uncharacterized protein from Escherichia coli (strain K12).